A 160-amino-acid polypeptide reads, in one-letter code: Endoribonuclease YbeY (160 aa).

Residues H121, H125, and H131 each coordinate Zn(2+).

The protein belongs to the endoribonuclease YbeY family. It depends on Zn(2+) as a cofactor.

The protein resides in the cytoplasm. Single strand-specific metallo-endoribonuclease involved in late-stage 70S ribosome quality control and in maturation of the 3' terminus of the 16S rRNA. The protein is Endoribonuclease YbeY of Syntrophus aciditrophicus (strain SB).